The following is a 337-amino-acid chain: 1-aminocyclopropane-1-carboxylate deaminase (337 aa).

Lysine 50 is subject to N6-(pyridoxal phosphate)lysine.

The protein belongs to the ACC deaminase/D-cysteine desulfhydrase family. Homotrimer. The cofactor is pyridoxal 5'-phosphate.

It catalyses the reaction 1-aminocyclopropane-1-carboxylate + H2O = 2-oxobutanoate + NH4(+). In terms of biological role, catalyzes a cyclopropane ring-opening reaction, the irreversible conversion of 1-aminocyclopropane-1-carboxylate (ACC) to ammonia and alpha-ketobutyrate. Allows growth on ACC as a nitrogen source. This is 1-aminocyclopropane-1-carboxylate deaminase from Mesorhizobium japonicum (strain LMG 29417 / CECT 9101 / MAFF 303099) (Mesorhizobium loti (strain MAFF 303099)).